The chain runs to 622 residues: Low affinity potassium transport system protein Kup (622 aa).

12 consecutive transmembrane segments (helical) span residues 9–29 (LPAI…TSPL), 49–69 (VFGF…IKYL), 103–123 (VIMG…TPAI), 137–157 (PQLD…LFMI), 165–185 (VGKL…GLGL), 213–233 (VSFI…ALYA), 247–267 (WFTV…ALLL), 276–296 (PFFL…AALA), 337–357 (IYIP…IVSF), 363–383 (LAAA…ILST), 396–416 (FVAL…TANL), and 419–439 (LLSG…VMTT).

The protein belongs to the HAK/KUP transporter (TC 2.A.72) family.

The protein resides in the cell inner membrane. The catalysed reaction is K(+)(in) + H(+)(in) = K(+)(out) + H(+)(out). In terms of biological role, responsible for the low-affinity transport of potassium into the cell. Likely operates as a K(+):H(+) symporter. This is Low affinity potassium transport system protein Kup from Escherichia coli O157:H7 (strain EC4115 / EHEC).